The primary structure comprises 208 residues: Outer-membrane lipoprotein LolB (208 aa).

An N-terminal signal peptide occupies residues 1–23 (MKPIQKLSLFRLLPLSCVLLLTA). C24 carries the N-palmitoyl cysteine lipid modification. C24 carries S-diacylglycerol cysteine lipidation.

Belongs to the LolB family. As to quaternary structure, monomer.

The protein resides in the cell outer membrane. In terms of biological role, plays a critical role in the incorporation of lipoproteins in the outer membrane after they are released by the LolA protein. The polypeptide is Outer-membrane lipoprotein LolB (Photorhabdus laumondii subsp. laumondii (strain DSM 15139 / CIP 105565 / TT01) (Photorhabdus luminescens subsp. laumondii)).